The primary structure comprises 323 residues: Cyclin-H (323 aa).

Residue serine 5 is modified to Phosphoserine; by CDK8. Phosphoserine is present on serine 132. The interval 295–323 is disordered; the sequence is KGYEDDDYVSKKPKQEEEEWTDDDLVDSL. The residue at position 304 (serine 304) is a Phosphoserine; by CDK8. The segment covering 310-323 has biased composition (acidic residues); it reads EEEEWTDDDLVDSL. The residue at position 315 (threonine 315) is a Phosphothreonine. Serine 322 is modified (phosphoserine).

Belongs to the cyclin family. Cyclin C subfamily. Associates primarily with CDK7 and MAT1 to form the CAK complex. CAK can further associate with the core-TFIIH to form the TFIIH basal transcription factor. As to expression, expressed in both the germinal and somatic cells of the testis.

It localises to the nucleus. In terms of biological role, regulates CDK7, the catalytic subunit of the CDK-activating kinase (CAK) enzymatic complex. CAK activates the cyclin-associated kinases CDK1, CDK2, CDK4 and CDK6 by threonine phosphorylation. CAK complexed to the core-TFIIH basal transcription factor activates RNA polymerase II by serine phosphorylation of the repetitive C-terminal domain (CTD) of its large subunit (POLR2A), allowing its escape from the promoter and elongation of the transcripts. Involved in cell cycle control and in RNA transcription by RNA polymerase II. Its expression and activity are constant throughout the cell cycle. This Mus musculus (Mouse) protein is Cyclin-H (Ccnh).